Consider the following 83-residue polypeptide: Large ribosomal subunit protein bL31B (83 aa).

The protein belongs to the bacterial ribosomal protein bL31 family. Type B subfamily. In terms of assembly, part of the 50S ribosomal subunit.

The chain is Large ribosomal subunit protein bL31B from Leifsonia xyli subsp. xyli (strain CTCB07).